A 290-amino-acid polypeptide reads, in one-letter code: Non-homologous end joining protein Ku (290 aa).

A Ku domain is found at 11–183 (TFGLISMPVR…EAPKITSEVK (173 aa)). A disordered region spans residues 253 to 290 (MKDQKKGSRLAEVDKESTVQMTPKKPAVKERRGRKRVA). Positions 254–269 (KDQKKGSRLAEVDKES) are enriched in basic and acidic residues.

Belongs to the prokaryotic Ku family. Homodimer. Interacts with LigD.

Its function is as follows. With LigD forms a non-homologous end joining (NHEJ) DNA repair enzyme, which repairs dsDNA breaks with reduced fidelity. Binds linear dsDNA with 5'- and 3'- overhangs but not closed circular dsDNA nor ssDNA. Recruits and stimulates the ligase activity of LigD. This Koribacter versatilis (strain Ellin345) protein is Non-homologous end joining protein Ku.